Here is a 74-residue protein sequence, read N- to C-terminus: MKSFYHYLMKYRHPKPQDAISQFANQAYEDHGFPKTSSDYHELSSYLELSADYLETMATFDEAWEKYETEVHHA.

The protein belongs to the UPF0346 family.

This is UPF0346 protein RBAM_019500 from Bacillus velezensis (strain DSM 23117 / BGSC 10A6 / LMG 26770 / FZB42) (Bacillus amyloliquefaciens subsp. plantarum).